The primary structure comprises 274 residues: 2,3,4,5-tetrahydropyridine-2,6-dicarboxylate N-succinyltransferase (274 aa).

Substrate is bound by residues Arg-104 and Asp-141.

It belongs to the transferase hexapeptide repeat family. In terms of assembly, homotrimer.

The protein localises to the cytoplasm. The enzyme catalyses (S)-2,3,4,5-tetrahydrodipicolinate + succinyl-CoA + H2O = (S)-2-succinylamino-6-oxoheptanedioate + CoA. The protein operates within amino-acid biosynthesis; L-lysine biosynthesis via DAP pathway; LL-2,6-diaminopimelate from (S)-tetrahydrodipicolinate (succinylase route): step 1/3. This Shewanella putrefaciens (strain CN-32 / ATCC BAA-453) protein is 2,3,4,5-tetrahydropyridine-2,6-dicarboxylate N-succinyltransferase.